The primary structure comprises 318 residues: Probable cell division protein WhiA (318 aa).

The H-T-H motif DNA-binding region spans serine 281–lysine 314.

Belongs to the WhiA family.

Involved in cell division and chromosome segregation. This Clostridium tetani (strain Massachusetts / E88) protein is Probable cell division protein WhiA.